The chain runs to 239 residues: tRNA1(Val) (adenine(37)-N6)-methyltransferase (239 aa).

Belongs to the methyltransferase superfamily. tRNA (adenine-N(6)-)-methyltransferase family.

Its subcellular location is the cytoplasm. It catalyses the reaction adenosine(37) in tRNA1(Val) + S-adenosyl-L-methionine = N(6)-methyladenosine(37) in tRNA1(Val) + S-adenosyl-L-homocysteine + H(+). In terms of biological role, specifically methylates the adenine in position 37 of tRNA(1)(Val) (anticodon cmo5UAC). The chain is tRNA1(Val) (adenine(37)-N6)-methyltransferase from Vibrio vulnificus (strain YJ016).